The chain runs to 417 residues: Gamma-glutamyl phosphate reductase (417 aa).

It belongs to the gamma-glutamyl phosphate reductase family.

The protein localises to the cytoplasm. It carries out the reaction L-glutamate 5-semialdehyde + phosphate + NADP(+) = L-glutamyl 5-phosphate + NADPH + H(+). It participates in amino-acid biosynthesis; L-proline biosynthesis; L-glutamate 5-semialdehyde from L-glutamate: step 2/2. Catalyzes the NADPH-dependent reduction of L-glutamate 5-phosphate into L-glutamate 5-semialdehyde and phosphate. The product spontaneously undergoes cyclization to form 1-pyrroline-5-carboxylate. In Haemophilus influenzae (strain PittGG), this protein is Gamma-glutamyl phosphate reductase.